Here is a 538-residue protein sequence, read N- to C-terminus: Phosphoenolpyruvate carboxykinase (ATP) (538 aa).

3 residues coordinate substrate: arginine 64, tyrosine 205, and lysine 211. ATP contacts are provided by residues lysine 211, histidine 230, and 246–254; that span reads GLSGTGKTT. Mn(2+) is bound by residues lysine 211 and histidine 230. Aspartate 267 lines the Mn(2+) pocket. ATP contacts are provided by residues glutamate 295, arginine 331, 447–448, and threonine 453; that span reads RI. Arginine 331 lines the substrate pocket.

This sequence belongs to the phosphoenolpyruvate carboxykinase (ATP) family. Monomer. The cofactor is Mn(2+).

It is found in the cytoplasm. The catalysed reaction is oxaloacetate + ATP = phosphoenolpyruvate + ADP + CO2. It participates in carbohydrate biosynthesis; gluconeogenesis. Its function is as follows. Involved in the gluconeogenesis. Catalyzes the conversion of oxaloacetate (OAA) to phosphoenolpyruvate (PEP) through direct phosphoryl transfer between the nucleoside triphosphate and OAA. The sequence is that of Phosphoenolpyruvate carboxykinase (ATP) from Haemophilus influenzae (strain PittEE).